Consider the following 125-residue polypeptide: Holo-[acyl-carrier-protein] synthase (125 aa).

Residues D9 and E58 each contribute to the Mg(2+) site.

It belongs to the P-Pant transferase superfamily. AcpS family. Mg(2+) serves as cofactor.

It localises to the cytoplasm. It carries out the reaction apo-[ACP] + CoA = holo-[ACP] + adenosine 3',5'-bisphosphate + H(+). Functionally, transfers the 4'-phosphopantetheine moiety from coenzyme A to a Ser of acyl-carrier-protein. This is Holo-[acyl-carrier-protein] synthase from Shewanella amazonensis (strain ATCC BAA-1098 / SB2B).